The following is a 473-amino-acid chain: Lactate utilization protein B (473 aa).

4Fe-4S ferredoxin-type domains lie at Gly302 to Tyr332 and Tyr351 to Leu380. Residues Cys311, Cys314, Cys317, Cys321, Cys364, Cys367, and Cys371 each contribute to the [4Fe-4S] cluster site.

It belongs to the LutB/YkgF family.

In terms of biological role, is involved in L-lactate degradation and allows cells to grow with lactate as the sole carbon source. Has probably a role as an electron transporter during oxidation of L-lactate. The chain is Lactate utilization protein B from Bacillus cereus (strain AH820).